A 153-amino-acid chain; its full sequence is MNVGTAHSEVNPNTRVMNSRGIWLSYVLGIGLLHIILLSIPFVSVPVVWTLTNLIHNMCMYIFLHTVKGTPFETPDQGKARLLTHWEQMDYGVQFTASRKFLTITPIILYFLTSFYTKYDRVHFVINTISLLTVLIPKLPQFHGVRLFGINKY.

Residues Met1–Gly21 lie on the Cytoplasmic side of the membrane. A run of 2 helical transmembrane segments spans residues Ile22–Phe42 and Val43–Phe63. Over Leu64–Gln94 the chain is Cytoplasmic. A helical membrane pass occupies residues Phe95–Thr117. Over Lys118 to Arg121 the chain is Extracellular. Residues Val122–Phe142 traverse the membrane as a helical segment. At Pro137 the chain carries Hydroxyproline. Over His143–Tyr153 the chain is Cytoplasmic.

The protein belongs to the ORM family. Ceramide-sensitive subunit of the serine palmitoyltransferase (SPT) complex, which is also composed of SPTLC1, SPTLC2/3 and SPTSSA/B. In terms of processing, when hydroxylated at Pro-137, ubiquitinated via 'Lys-48'-linkage, leading to proteasomal degradation. In endothelial cells, ORMDL3 proteasomal degradation is controlled by the sphingosine 1-phosphate receptor signaling pathway.

Its subcellular location is the endoplasmic reticulum membrane. Functionally, plays an essential role in the homeostatic regulation of sphingolipid de novo biosynthesis by modulating the activity of the serine palmitoyltransferase (SPT) in response to ceramide levels. When complexed to SPT, the binding of ceramides to its N-terminus stabilizes a conformation that block SPT substrate entry, hence preventing SPT catalytic activity. Through this mechanism, maintains ceramide levels at sufficient concentrations for the production of complex sphingolipids, but which prevents the accumulation of ceramides to levels that trigger apoptosis. The sequence is that of ORM1-like protein 3 (ormdl3) from Danio rerio (Zebrafish).